The sequence spans 548 residues: Copine-2 (548 aa).

2 C2 domains span residues 6–131 (DGGA…TRPL) and 138–263 (PAGK…PLEI). Positions 39, 45, 97, 99, 102, 109, 170, 176, 232, 234, and 240 each coordinate Ca(2+). The tract at residues 247-304 (TSVLQMSEARDGVPLEIECINPKKQRKKKSYKNSGIIILRSCKIHRNYSFLDYILGGC) is linker region. The 203-residue stretch at 305–507 (QLMFTVGIDF…AARDIVQFVP (203 aa)) folds into the VWFA domain.

The protein belongs to the copine family. Ca(2+) serves as cofactor.

The protein localises to the cytoplasm. It localises to the nucleus. Its subcellular location is the cell membrane. In terms of biological role, calcium-dependent phospholipid-binding protein that plays a role in calcium-mediated intracellular processes. Exhibits calcium-dependent cell membrane binding properties. The polypeptide is Copine-2 (Mus musculus (Mouse)).